The primary structure comprises 289 residues: Ribosomal RNA small subunit methyltransferase I (289 aa).

The protein belongs to the methyltransferase superfamily. RsmI family.

The protein resides in the cytoplasm. The catalysed reaction is cytidine(1402) in 16S rRNA + S-adenosyl-L-methionine = 2'-O-methylcytidine(1402) in 16S rRNA + S-adenosyl-L-homocysteine + H(+). In terms of biological role, catalyzes the 2'-O-methylation of the ribose of cytidine 1402 (C1402) in 16S rRNA. The protein is Ribosomal RNA small subunit methyltransferase I of Halalkalibacterium halodurans (strain ATCC BAA-125 / DSM 18197 / FERM 7344 / JCM 9153 / C-125) (Bacillus halodurans).